A 310-amino-acid polypeptide reads, in one-letter code: UPF0761 membrane protein VF_0100 (310 aa).

A run of 6 helical transmembrane segments spans residues 34–54, 97–117, 136–156, 178–198, 207–227, and 242–262; these read YMAYITLLSLVPLITVLLSVL, MTAVGSGFLFVASVMLISSID, FSLYWMILTLGPLLVGASLAA, LLGWLPIILSFSAFVGLYLLV, HALIGAMSAGCLFEFSKVGFA, and ALAAVPILFVWVYLCWIIVLI.

This sequence belongs to the UPF0761 family.

The protein localises to the cell inner membrane. This Aliivibrio fischeri (strain ATCC 700601 / ES114) (Vibrio fischeri) protein is UPF0761 membrane protein VF_0100.